A 451-amino-acid chain; its full sequence is Phosphoglucosamine mutase (451 aa).

Catalysis depends on serine 101, which acts as the Phosphoserine intermediate. Residues serine 101, aspartate 242, aspartate 244, and aspartate 246 each coordinate Mg(2+). Serine 101 is modified (phosphoserine).

The protein belongs to the phosphohexose mutase family. It depends on Mg(2+) as a cofactor. Activated by phosphorylation.

It carries out the reaction alpha-D-glucosamine 1-phosphate = D-glucosamine 6-phosphate. In terms of biological role, catalyzes the conversion of glucosamine-6-phosphate to glucosamine-1-phosphate. The chain is Phosphoglucosamine mutase from Beijerinckia indica subsp. indica (strain ATCC 9039 / DSM 1715 / NCIMB 8712).